The sequence spans 246 residues: Probable transcriptional regulatory protein ORF2U (246 aa).

The protein belongs to the TACO1 family.

Its subcellular location is the cytoplasm. This is Probable transcriptional regulatory protein ORF2U from Hathewaya histolytica (Clostridium histolyticum).